A 128-amino-acid polypeptide reads, in one-letter code: Small ribosomal subunit protein uS11 (128 aa).

The protein belongs to the universal ribosomal protein uS11 family. Part of the 30S ribosomal subunit. Interacts with proteins S7 and S18. Binds to IF-3.

In terms of biological role, located on the platform of the 30S subunit, it bridges several disparate RNA helices of the 16S rRNA. Forms part of the Shine-Dalgarno cleft in the 70S ribosome. This chain is Small ribosomal subunit protein uS11, found in Phytoplasma australiense.